Consider the following 239-residue polypeptide: Pyridoxine 5'-phosphate synthase (239 aa).

Asn-7 serves as a coordination point for 3-amino-2-oxopropyl phosphate. 9 to 10 contacts 1-deoxy-D-xylulose 5-phosphate; it reads DH. Arg-18 is a 3-amino-2-oxopropyl phosphate binding site. His-43 serves as the catalytic Proton acceptor. 1-deoxy-D-xylulose 5-phosphate is bound by residues Arg-45 and His-50. The active-site Proton acceptor is the Glu-70. Thr-100 is a binding site for 1-deoxy-D-xylulose 5-phosphate. Residue His-191 is the Proton donor of the active site. 3-amino-2-oxopropyl phosphate is bound by residues Gly-192 and 213 to 214; that span reads GH.

This sequence belongs to the PNP synthase family. In terms of assembly, homooctamer; tetramer of dimers.

The protein resides in the cytoplasm. The enzyme catalyses 3-amino-2-oxopropyl phosphate + 1-deoxy-D-xylulose 5-phosphate = pyridoxine 5'-phosphate + phosphate + 2 H2O + H(+). The protein operates within cofactor biosynthesis; pyridoxine 5'-phosphate biosynthesis; pyridoxine 5'-phosphate from D-erythrose 4-phosphate: step 5/5. Functionally, catalyzes the complicated ring closure reaction between the two acyclic compounds 1-deoxy-D-xylulose-5-phosphate (DXP) and 3-amino-2-oxopropyl phosphate (1-amino-acetone-3-phosphate or AAP) to form pyridoxine 5'-phosphate (PNP) and inorganic phosphate. The polypeptide is Pyridoxine 5'-phosphate synthase (Pelobacter propionicus (strain DSM 2379 / NBRC 103807 / OttBd1)).